The following is a 338-amino-acid chain: Uroporphyrinogen decarboxylase (338 aa).

Residues 25 to 29 (RQAGR), F44, D75, Y146, S201, and H314 contribute to the substrate site.

The protein belongs to the uroporphyrinogen decarboxylase family. Homodimer.

It is found in the cytoplasm. The enzyme catalyses uroporphyrinogen III + 4 H(+) = coproporphyrinogen III + 4 CO2. It participates in porphyrin-containing compound metabolism; protoporphyrin-IX biosynthesis; coproporphyrinogen-III from 5-aminolevulinate: step 4/4. In terms of biological role, catalyzes the decarboxylation of four acetate groups of uroporphyrinogen-III to yield coproporphyrinogen-III. This is Uroporphyrinogen decarboxylase from Aquifex aeolicus (strain VF5).